The chain runs to 39 residues: Cytochrome b559 subunit beta (39 aa).

A helical transmembrane segment spans residues 14–30 (WLAIHGLAVPTVFFLGS). Residue histidine 18 participates in heme binding.

As to quaternary structure, heterodimer of an alpha subunit and a beta subunit. PSII is composed of 1 copy each of membrane proteins PsbA, PsbB, PsbC, PsbD, PsbE, PsbF, PsbH, PsbI, PsbJ, PsbK, PsbL, PsbM, PsbT, PsbX, PsbY, PsbZ, Psb30/Ycf12, at least 3 peripheral proteins of the oxygen-evolving complex and a large number of cofactors. It forms dimeric complexes. Heme b serves as cofactor. The N-terminus is blocked.

The protein resides in the plastid. Its subcellular location is the chloroplast thylakoid membrane. In terms of biological role, this b-type cytochrome is tightly associated with the reaction center of photosystem II (PSII). PSII is a light-driven water:plastoquinone oxidoreductase that uses light energy to abstract electrons from H(2)O, generating O(2) and a proton gradient subsequently used for ATP formation. It consists of a core antenna complex that captures photons, and an electron transfer chain that converts photonic excitation into a charge separation. In Spinacia oleracea (Spinach), this protein is Cytochrome b559 subunit beta.